Reading from the N-terminus, the 1108-residue chain is Serine/threonine-protein kinase AKL1 (1108 aa).

N-acetylserine is present on Ser2. Position 10 is a phosphoserine (Ser10). The Protein kinase domain occupies Val35–Glu319. Residues Leu41–Ile49 and Lys70 contribute to the ATP site. The active-site Proton acceptor is Asp181. The disordered stretch occupies residues Ile405 to Ile466. Phosphoserine is present on Ser407. Basic and acidic residues predominate over residues Glu419 to Ser435. Residues Arg436–Asn449 show a composition bias toward low complexity. Thr471 carries the post-translational modification Phosphothreonine. Residues Lys493–Pro513 show a composition bias toward polar residues. Residues Lys493–Tyr534 are disordered. Residue Ser504 is modified to Phosphoserine. Residues Gln514–Tyr534 are compositionally biased toward low complexity. Ser541 and Ser574 each carry phosphoserine. The span at Gln590 to Gln629 shows a compositional bias: low complexity. 2 disordered regions span residues Gln590 to Gly663 and Glu765 to Ser791. The span at Asn781–Ser791 shows a compositional bias: polar residues. Phosphoserine is present on Ser801. Residues Ala807–Asn838 form a disordered region. Residues Gln810 to Gln819 show a composition bias toward polar residues. Position 846 is a phosphoserine (Ser846). A disordered region spans residues Gly858–Lys1108. Residues Ala859–Ser872 show a composition bias toward low complexity. Residues Asp910–Arg934 are compositionally biased toward basic and acidic residues. The span at Ser935–Thr976 shows a compositional bias: polar residues. 2 positions are modified to phosphoserine: Ser953 and Ser960. Over residues Glu1006–Ser1048 the composition is skewed to basic and acidic residues. Residues Lys1008 and Lys1046 each participate in a glycyl lysine isopeptide (Lys-Gly) (interchain with G-Cter in ubiquitin) cross-link. Ser1048 carries the post-translational modification Phosphoserine. Low complexity predominate over residues Asn1049–Ser1060. The span at Gln1071–Ala1082 shows a compositional bias: basic and acidic residues. Phosphoserine is present on Ser1072.

This sequence belongs to the protein kinase superfamily. Ser/Thr protein kinase family.

It carries out the reaction L-seryl-[protein] + ATP = O-phospho-L-seryl-[protein] + ADP + H(+). The catalysed reaction is L-threonyl-[protein] + ATP = O-phospho-L-threonyl-[protein] + ADP + H(+). Phosphorylates SCD5. The protein is Serine/threonine-protein kinase AKL1 (AKL1) of Saccharomyces cerevisiae (strain ATCC 204508 / S288c) (Baker's yeast).